Consider the following 833-residue polypeptide: Leucine--tRNA ligase (833 aa).

A 'HIGH' region motif is present at residues 41–52 (PYPSGAGLHVGH). A 'KMSKS' region motif is present at residues 610–614 (KMSKS). An ATP-binding site is contributed by Lys613.

It belongs to the class-I aminoacyl-tRNA synthetase family.

It localises to the cytoplasm. The catalysed reaction is tRNA(Leu) + L-leucine + ATP = L-leucyl-tRNA(Leu) + AMP + diphosphate. The polypeptide is Leucine--tRNA ligase (Streptococcus equi subsp. zooepidemicus (strain H70)).